The chain runs to 1630 residues: Histone transcription regulator 3 homolog (1630 aa).

One copy of the TPR 1 repeat lies at 8–42 (NAASEDLDKEKRTLEIRIEEAVQIYQNALSAQKQG). The segment at 325-347 (KDIVPPPSDNLPKPQLLKRPIDD) is disordered. A TPR 2 repeat occupies 1230–1263 (WRALYMLGKACRKCGDMENALVHFEAAAALAPTK).

This sequence belongs to the HIR3 family. Interacts with hip1 and slm9.

It localises to the nucleus. Functionally, has a role in a nucleosome assembly pathway that is required for the integrity of heterochromatin and proper chromosome segregation. Required for transcriptional silencing in the outer repeat (otr) region of centromeric repeats and the Tf2 long terminal repeat retrotransposons. The polypeptide is Histone transcription regulator 3 homolog (hip3) (Schizosaccharomyces pombe (strain 972 / ATCC 24843) (Fission yeast)).